Here is a 278-residue protein sequence, read N- to C-terminus: Small ribosomal subunit protein uS2 (278 aa).

Disordered regions lie at residues 216 to 235 (EAAA…TQWD) and 250 to 278 (NFAA…EWTN). The span at 256-278 (ADGNWGATTGGDWAAAGGEEWTN) shows a compositional bias: low complexity.

Belongs to the universal ribosomal protein uS2 family. Component of the small ribosomal subunit. Mature ribosomes consist of a small (40S) and a large (60S) subunit. The 40S subunit contains about 33 different proteins and 1 molecule of RNA (18S). The 60S subunit contains about 49 different proteins and 3 molecules of RNA (25S, 5.8S and 5S). Interacts with ribosomal protein S21.

It localises to the cytoplasm. Required for the assembly and/or stability of the 40S ribosomal subunit. Required for the processing of the 20S rRNA-precursor to mature 18S rRNA in a late step of the maturation of 40S ribosomal subunits. The protein is Small ribosomal subunit protein uS2 of Monosiga brevicollis (Choanoflagellate).